The sequence spans 230 residues: V-type proton ATPase subunit E (230 aa).

It belongs to the V-ATPase E subunit family. V-ATPase is a heteromultimeric enzyme composed of a peripheral catalytic V1 complex (components A to H) attached to an integral membrane V0 proton pore complex (components: a, c, c', c'' and d).

Subunit of the peripheral V1 complex of vacuolar ATPase essential for assembly or catalytic function. V-ATPase is responsible for acidifying a variety of intracellular compartments in eukaryotic cells. The chain is V-type proton ATPase subunit E (VATE) from Citrus unshiu (Satsuma mandarin).